We begin with the raw amino-acid sequence, 287 residues long: MFENENPNGSWLDEYQNDVRYGLKGKKIIEEISNFQKITIFESNRYGKALLLDNCWMTAEYQEKQYHECIVHPALCGSKEINKVLIIGGGDGGSARECLKYQELKNLDLIEIDKRVVELSQQYLSVIGGNCWKDQRLNLKLTNGINWVKDAKDNSYDVIIIDGSDPKGPAKGLFNKDFFKDCHRILKPDGVLGAQTESPESFEDIHINTVKMIKEVFKYADPLYGYVPIYPSGIWSWTFASIKKPRHLYPIISRANTISKTCQVWSPRWQRGGFDAIPANIERKLQQ.

The PABS domain occupies 9–242; the sequence is GSWLDEYQND…GIWSWTFASI (234 aa). Residue glutamine 36 coordinates S-methyl-5'-thioadenosine. Spermidine contacts are provided by histidine 67 and aspartate 91. S-methyl-5'-thioadenosine contacts are provided by residues glutamate 111 and 143–144; that span reads NG. Residue aspartate 162 is the Proton acceptor of the active site. Proline 169 contacts S-methyl-5'-thioadenosine.

This sequence belongs to the spermidine/spermine synthase family. As to quaternary structure, homodimer or homotetramer.

The protein localises to the cytoplasm. The catalysed reaction is S-adenosyl 3-(methylsulfanyl)propylamine + putrescine = S-methyl-5'-thioadenosine + spermidine + H(+). The protein operates within amine and polyamine biosynthesis; spermidine biosynthesis; spermidine from putrescine: step 1/1. Its function is as follows. Catalyzes the irreversible transfer of a propylamine group from the amino donor S-adenosylmethioninamine (decarboxy-AdoMet) to putrescine (1,4-diaminobutane) to yield spermidine. The polypeptide is Polyamine aminopropyltransferase (Prochlorococcus marinus (strain SARG / CCMP1375 / SS120)).